The following is a 1782-amino-acid chain: Vitellogenin receptor (1782 aa).

The first 18 residues, 1 to 18, serve as a signal peptide directing secretion; sequence MRFIVLLFICSFIYPCYV. At 19 to 1663 the chain is on the extracellular side; sequence SSIGFRRISK…SINFSRNTRN (1645 aa). LDL-receptor class A domains are found at residues 35–72, 81–118, and 122–157; these read KCEDGYFQCNSGECIPVDKKCDYIDHCIDGSDEDFECD, TCAKDQFKCKNQECIPAAKYCDMVNDCLDESDEHDGCV, and NCTNKFLCTDGHCINKEWVCDGRNDCPDGNDEWNCK. Intrachain disulfides connect Cys-36–Cys-48, Cys-43–Cys-61, Cys-55–Cys-71, Cys-82–Cys-94, Cys-89–Cys-107, and Cys-101–Cys-117. A glycan (N-linked (GlcNAc...) asparagine) is linked at Asn-122. Disulfide bonds link Cys-123/Cys-134, Cys-129/Cys-147, and Cys-141/Cys-156. Asn-159 is a glycosylation site (N-linked (GlcNAc...) asparagine). Residues 166 to 205 form the LDL-receptor class A 4 domain; it reads SCKTENYQYMCANHRCISLKVVCDKKDDCGDGSDEGPGCT. 3 cysteine pairs are disulfide-bonded: Cys-167/Cys-181, Cys-176/Cys-194, and Cys-188/Cys-204. N-linked (GlcNAc...) asparagine glycosylation is found at Asn-208 and Asn-239. Positions 208–243 constitute an EGF-like 1 domain; it reads NCSSAGCQSNCHQTPKGSVCTCKPGYKLQKDNRTCN. The EGF-like; calcium-binding domain occupies 244-283; it reads DIDECQAYGICDQDCMNVPGSYACTCQREYYLENDKRTCK. 3 disulfide bridges follow: Cys-248/Cys-258, Cys-254/Cys-267, and Cys-269/Cys-282. 5 LDL-receptor class B repeats span residues 327–374, 375–416, 417–460, 461–501, and 502–544; these read DYVY…DWIT, KNIY…LPTQ, GKMY…DYPN, ERLY…TVFQ, and NKLY…DHSA. Residues 552–588 form the EGF-like 2 domain; it reads PCYSNPCSQLCMLNQNKGYTCGCTLDKKLNADKHTCQ. N-linked (GlcNAc...) asparagine glycosylation is found at Asn-702, Asn-859, Asn-896, and Asn-923. The EGF-like 3 domain maps to 889–927; it reads DCQKNNGNCSHVCLPSLITSFICACPPGMELSNDNRTCI. LDL-receptor class A domains lie at 931-969, 973-1009, 1012-1049, 1052-1090, and 1094-1131; these read ECSKNEYKCSEHNICIQRNQLCDGIENCPNGEDETSECR, RCKENQFMCKNGDCIRLKDRCNSRYDCTDQSDEQNCE, KCKSDEFQCKFTETCIPKTKMCDSNPDCDDLSDEEDCR, ECTSNEFKCNNGKCIPNTFVCDNDNDCEDGEDEAAEKCY, and ACKMPKMFKCPNGDCISDSLLCNGINDCNDGSDEVHCL. 15 disulfides stabilise this stretch: Cys-932–Cys-945, Cys-939–Cys-958, Cys-952–Cys-968, Cys-974–Cys-986, Cys-981–Cys-999, Cys-993–Cys-1008, Cys-1013–Cys-1026, Cys-1020–Cys-1039, Cys-1033–Cys-1048, Cys-1053–Cys-1065, Cys-1060–Cys-1078, Cys-1072–Cys-1089, Cys-1095–Cys-1108, Cys-1103–Cys-1121, and Cys-1115–Cys-1130. Residues Asn-1133 and Asn-1140 are each glycosylated (N-linked (GlcNAc...) asparagine). 3 consecutive LDL-receptor class A domains span residues 1140-1177, 1178-1214, and 1225-1260; these read NCSLNEYRCLGTDICLPKNVRCDGKNDCPQSDDEQNCT, YCFENEFACDNKRCIPELWVCDKANDCGDNSDEKNCD, and ECDEFKCSVGTCLPYSKVCDGNRDCPDGSDETGKCQ. 9 disulfides stabilise this stretch: Cys-1141/Cys-1154, Cys-1148/Cys-1167, Cys-1161/Cys-1176, Cys-1179/Cys-1191, Cys-1186/Cys-1204, Cys-1198/Cys-1213, Cys-1226/Cys-1236, Cys-1231/Cys-1249, and Cys-1243/Cys-1259. Asn-1175 carries an N-linked (GlcNAc...) asparagine glycan. Positions 1262 to 1298 constitute an EGF-like 4 domain; the sequence is ACTVNNFCKGMCYKTPAGAVCGCQSGYRLAVDMISCE. LDL-receptor class B repeat units follow at residues 1385-1425, 1471-1518, and 1519-1561; these read DSVY…DWIT, RWLF…DHVK, and SKLY…FEQS. Asn-1626, Asn-1640, and Asn-1656 each carry an N-linked (GlcNAc...) asparagine glycan. Residues 1664–1684 form a helical membrane-spanning segment; the sequence is ISGIYSITIIVLLVSVLLLCV. The Cytoplasmic segment spans residues 1685 to 1782; that stretch reads YYYYQKNKLK…ALIYFVHNSK (98 aa).

Expressed in ovaries of reproductive females.

It is found in the membrane. Involved in uptake of vitellogenin by endocytosis. Expression is regulated by the juvenile hormone analog, methoprene (in vitro). The polypeptide is Vitellogenin receptor (Solenopsis invicta (Red imported fire ant)).